The chain runs to 105 residues: Large ribosomal subunit protein P2 (105 aa).

The protein belongs to the eukaryotic ribosomal protein P1/P2 family. In terms of assembly, P1 and P2 exist as dimers at the large ribosomal subunit. Phosphorylated.

Plays an important role in the elongation step of protein synthesis. This chain is Large ribosomal subunit protein P2 (LIP2), found in Leishmania braziliensis.